We begin with the raw amino-acid sequence, 193 residues long: Dual-action ribosomal maturation protein DarP (193 aa).

Residues 1–10 are compositionally biased toward basic and acidic residues; the sequence is MRGRDEDTGE. Disordered stretches follow at residues 1 to 20 and 171 to 193; these read MRGR…SQQR and QEQG…EDDE. The segment covering 181 to 193 has biased composition (acidic residues); sequence GLEDGESALEDDE.

Belongs to the DarP family.

It is found in the cytoplasm. Functionally, member of a network of 50S ribosomal subunit biogenesis factors which assembles along the 30S-50S interface, preventing incorrect 23S rRNA structures from forming. Promotes peptidyl transferase center (PTC) maturation. This Xanthomonas oryzae pv. oryzae (strain MAFF 311018) protein is Dual-action ribosomal maturation protein DarP.